The primary structure comprises 219 residues: Putative ankyrin repeat protein BB_0399 (219 aa).

ANK repeat units lie at residues 104–133, 137–166, and 170–199; these read YKISPISISIINNEFEITKILIDYGISLNQ, TGYSPIFWAIYTNNEKIFEFLKESGADLSF, and NRKTPMQAAIETENIKLIKSLEKKKIYIDD.

The sequence is that of Putative ankyrin repeat protein BB_0399 from Borreliella burgdorferi (strain ATCC 35210 / DSM 4680 / CIP 102532 / B31) (Borrelia burgdorferi).